The chain runs to 146 residues: 3-hydroxyacyl-[acyl-carrier-protein] dehydratase FabZ (146 aa).

The active site involves histidine 49.

The protein belongs to the thioester dehydratase family. FabZ subfamily.

The protein resides in the cytoplasm. The catalysed reaction is a (3R)-hydroxyacyl-[ACP] = a (2E)-enoyl-[ACP] + H2O. In terms of biological role, involved in unsaturated fatty acids biosynthesis. Catalyzes the dehydration of short chain beta-hydroxyacyl-ACPs and long chain saturated and unsaturated beta-hydroxyacyl-ACPs. The polypeptide is 3-hydroxyacyl-[acyl-carrier-protein] dehydratase FabZ (Pseudomonas savastanoi pv. phaseolicola (strain 1448A / Race 6) (Pseudomonas syringae pv. phaseolicola (strain 1448A / Race 6))).